The sequence spans 357 residues: Cytosolic Fe-S cluster assembly factor NAR1 (357 aa).

8 residues coordinate [4Fe-4S] cluster: cysteine 14, cysteine 28, cysteine 31, cysteine 34, cysteine 129, cysteine 172, cysteine 297, and cysteine 301.

The protein belongs to the NARF family.

Its function is as follows. Component of the cytosolic Fe/S protein assembly machinery. May play a role in the transfer of pre-assembled Fe/S clusters to target apoproteins. This Encephalitozoon cuniculi (strain GB-M1) (Microsporidian parasite) protein is Cytosolic Fe-S cluster assembly factor NAR1 (NAR1).